Reading from the N-terminus, the 141-residue chain is SLSASEKAAVLSIVGKIGSQGSALGSEALTRLFLSFPQTKTYFPHFDLTPGSADLNTHGGKIINALAGAANHLDDLAGNLSSLSDLHAYNLRVDPGNFPLLAHIIQVVLATHFPGDFTAEVQAAWDKFLALVSAVLTSKYR.

S1 is modified (N-acetylserine). Residues 1–141 (SLSASEKAAV…VSAVLTSKYR (141 aa)) enclose the Globin domain. H58 provides a ligand contact to O2. A heme b-binding site is contributed by H87.

Belongs to the globin family. Heterotetramer of two alpha chains and two beta chains. As to expression, red blood cells.

This is a tadpole (larval) alpha chain. This chain is Hemoglobin subunit alpha-3, found in Aquarana catesbeiana (American bullfrog).